We begin with the raw amino-acid sequence, 149 residues long: 3-dehydroquinate dehydratase (149 aa).

The Proton acceptor role is filled by Tyr23. Substrate contacts are provided by Asn75, His81, and Asp88. The active-site Proton donor is His101. Substrate contacts are provided by residues 102 to 103 (LS) and Arg112.

Belongs to the type-II 3-dehydroquinase family. As to quaternary structure, homododecamer.

The catalysed reaction is 3-dehydroquinate = 3-dehydroshikimate + H2O. The protein operates within metabolic intermediate biosynthesis; chorismate biosynthesis; chorismate from D-erythrose 4-phosphate and phosphoenolpyruvate: step 3/7. Its function is as follows. Catalyzes a trans-dehydration via an enolate intermediate. In Stenotrophomonas maltophilia (strain R551-3), this protein is 3-dehydroquinate dehydratase.